Reading from the N-terminus, the 399-residue chain is 4-hydroxy-3-methylbut-2-enyl diphosphate reductase (399 aa).

C66 provides a ligand contact to [4Fe-4S] cluster. Residue H96 coordinates (2E)-4-hydroxy-3-methylbut-2-enyl diphosphate. A dimethylallyl diphosphate-binding site is contributed by H96. H96 lines the isopentenyl diphosphate pocket. Position 157 (C157) interacts with [4Fe-4S] cluster. H185 lines the (2E)-4-hydroxy-3-methylbut-2-enyl diphosphate pocket. H185 serves as a coordination point for dimethylallyl diphosphate. H185 provides a ligand contact to isopentenyl diphosphate. The active-site Proton donor is E187. T250 provides a ligand contact to (2E)-4-hydroxy-3-methylbut-2-enyl diphosphate. Residue C288 participates in [4Fe-4S] cluster binding. The (2E)-4-hydroxy-3-methylbut-2-enyl diphosphate site is built by S317, S318, N319, and S380. 4 residues coordinate dimethylallyl diphosphate: S317, S318, N319, and S380. Residues S317, S318, N319, and S380 each coordinate isopentenyl diphosphate.

This sequence belongs to the IspH family. Requires [4Fe-4S] cluster as cofactor.

The enzyme catalyses isopentenyl diphosphate + 2 oxidized [2Fe-2S]-[ferredoxin] + H2O = (2E)-4-hydroxy-3-methylbut-2-enyl diphosphate + 2 reduced [2Fe-2S]-[ferredoxin] + 2 H(+). It catalyses the reaction dimethylallyl diphosphate + 2 oxidized [2Fe-2S]-[ferredoxin] + H2O = (2E)-4-hydroxy-3-methylbut-2-enyl diphosphate + 2 reduced [2Fe-2S]-[ferredoxin] + 2 H(+). It participates in isoprenoid biosynthesis; dimethylallyl diphosphate biosynthesis; dimethylallyl diphosphate from (2E)-4-hydroxy-3-methylbutenyl diphosphate: step 1/1. Its pathway is isoprenoid biosynthesis; isopentenyl diphosphate biosynthesis via DXP pathway; isopentenyl diphosphate from 1-deoxy-D-xylulose 5-phosphate: step 6/6. Its function is as follows. Catalyzes the conversion of 1-hydroxy-2-methyl-2-(E)-butenyl 4-diphosphate (HMBPP) into a mixture of isopentenyl diphosphate (IPP) and dimethylallyl diphosphate (DMAPP). Acts in the terminal step of the DOXP/MEP pathway for isoprenoid precursor biosynthesis. The sequence is that of 4-hydroxy-3-methylbut-2-enyl diphosphate reductase from Parasynechococcus marenigrum (strain WH8102).